The primary structure comprises 314 residues: Nodulation protein D 1 (314 aa).

Residues 6 to 63 (LDLNLLVALDALMTERNLTAAARQINLSQPAMSAAIARLRSYFRDELFTMRGRELVPT) enclose the HTH lysR-type domain. The H-T-H motif DNA-binding region spans 23 to 42 (LTAAARQINLSQPAMSAAIA).

The protein belongs to the LysR transcriptional regulatory family.

Its function is as follows. NodD regulates the expression of the nodABCFE genes which encode other nodulation proteins. NodD is also a negative regulator of its own expression. Binds flavonoids as inducers. This Bradyrhizobium elkanii protein is Nodulation protein D 1 (nodD1).